Consider the following 393-residue polypeptide: Iripin-5 (393 aa).

The N-terminal stretch at 1 to 16 (MKTLIVLMCSLVVVWA) is a signal peptide. Residues Asn-198 and Asn-245 are each glycosylated (N-linked (GlcNAc...) asparagine).

This sequence belongs to the serpin family. Highly expressed in female salivary gland during blood feeding. Expressed in female midgut and ovary during blood feeding.

Its subcellular location is the secreted. Functionally, serine protease inhibitor that modulates blood feeding of ticks on vertebrate species. Inhibits host neutrophil elastase (ELANE) and proteinase 3/myeloblastin (PRTN3). Moderately inhibits host chymase, cathepsin G (CTSG), trypsin and alpha-chymotrypsin. Decreases host neutrophil migration. Decreases nitric oxide production by host macrophages. Decreases host complement activity. This chain is Iripin-5, found in Ixodes ricinus (Common tick).